Reading from the N-terminus, the 65-residue chain is Small ribosomal subunit protein eS31 (65 aa).

Positions 36, 39, 55, and 58 each coordinate Zn(2+). The C4-type zinc finger occupies 36–58; sequence CPKCGSVMAFHKEPVPRWHCGKC.

It belongs to the eukaryotic ribosomal protein eS31 family. As to quaternary structure, part of the 30S ribosomal subunit. The cofactor is Zn(2+).

This is Small ribosomal subunit protein eS31 from Pyrobaculum aerophilum (strain ATCC 51768 / DSM 7523 / JCM 9630 / CIP 104966 / NBRC 100827 / IM2).